The sequence spans 150 residues: 3-hydroxyacyl-[acyl-carrier-protein] dehydratase FabZ (150 aa).

His-54 is an active-site residue.

This sequence belongs to the thioester dehydratase family. FabZ subfamily.

It localises to the cytoplasm. The catalysed reaction is a (3R)-hydroxyacyl-[ACP] = a (2E)-enoyl-[ACP] + H2O. Functionally, involved in unsaturated fatty acids biosynthesis. Catalyzes the dehydration of short chain beta-hydroxyacyl-ACPs and long chain saturated and unsaturated beta-hydroxyacyl-ACPs. The sequence is that of 3-hydroxyacyl-[acyl-carrier-protein] dehydratase FabZ from Pseudoalteromonas translucida (strain TAC 125).